A 96-amino-acid chain; its full sequence is Large ribosomal subunit protein bL27 (96 aa).

The propeptide occupies 1–9 (MLKFDIQHF). Positions 1 to 33 (MLKFDIQHFAHKKGGGSTSNGRDSESKRLGAKR) are disordered. Residues 22-33 (RDSESKRLGAKR) are compositionally biased toward basic and acidic residues.

This sequence belongs to the bacterial ribosomal protein bL27 family. In terms of processing, the N-terminus is cleaved by ribosomal processing cysteine protease Prp.

This Listeria innocua serovar 6a (strain ATCC BAA-680 / CLIP 11262) protein is Large ribosomal subunit protein bL27.